A 229-amino-acid polypeptide reads, in one-letter code: Potassium/proton antiporter CemA (229 aa).

3 helical membrane passes run phenylalanine 7–phenylalanine 27, isoleucine 114–leucine 134, and isoleucine 189–isoleucine 209.

It belongs to the CemA family.

It is found in the plastid. Its subcellular location is the chloroplast inner membrane. The catalysed reaction is K(+)(in) + H(+)(out) = K(+)(out) + H(+)(in). Its function is as follows. Contributes to K(+)/H(+) antiport activity by supporting proton efflux to control proton extrusion and homeostasis in chloroplasts in a light-dependent manner to modulate photosynthesis. Prevents excessive induction of non-photochemical quenching (NPQ) under continuous-light conditions. Indirectly promotes efficient inorganic carbon uptake into chloroplasts. This chain is Potassium/proton antiporter CemA, found in Panax ginseng (Korean ginseng).